The primary structure comprises 589 residues: Protein POF1B (589 aa).

Residues 334–443 (TFSNIREELG…QNLRMQVSET (110 aa)) adopt a coiled-coil conformation.

Interacts with nonmuscle actin.

Its subcellular location is the cell junction. The protein resides in the tight junction. Its function is as follows. Plays a key role in the organization of epithelial monolayers by regulating the actin cytoskeleton. May be involved in ovary development. This Homo sapiens (Human) protein is Protein POF1B (POF1B).